Here is a 501-residue protein sequence, read N- to C-terminus: Cytochrome P450 71B3 (501 aa).

Residues Ser-2–Phe-22 traverse the membrane as a helical segment. Cys-445 contributes to the heme binding site.

This sequence belongs to the cytochrome P450 family. It depends on heme as a cofactor.

It is found in the membrane. This chain is Cytochrome P450 71B3 (CYP71B3), found in Arabidopsis thaliana (Mouse-ear cress).